Reading from the N-terminus, the 303-residue chain is Elongation factor Ts (303 aa).

The interval 79 to 82 (TDFV) is involved in Mg(2+) ion dislocation from EF-Tu.

It belongs to the EF-Ts family.

It is found in the cytoplasm. Its function is as follows. Associates with the EF-Tu.GDP complex and induces the exchange of GDP to GTP. It remains bound to the aminoacyl-tRNA.EF-Tu.GTP complex up to the GTP hydrolysis stage on the ribosome. The polypeptide is Elongation factor Ts (Syntrophotalea carbinolica (strain DSM 2380 / NBRC 103641 / GraBd1) (Pelobacter carbinolicus)).